The sequence spans 124 residues: Fluoride-specific ion channel FluC (124 aa).

A run of 4 helical transmembrane segments spans residues 1 to 21 (MIALIAAVSAGGIAGTLLRFA), 37 to 57 (GTLAVNLVGCLLIGLLYGLFL), 69 to 89 (GLIVGFLGGLTTFSSFSLDTV), and 99 to 119 (LALGYTSISVVGGLLATWAGL). Residues Gly-76 and Thr-79 each contribute to the Na(+) site.

Belongs to the fluoride channel Fluc/FEX (TC 1.A.43) family.

The protein localises to the cell inner membrane. It catalyses the reaction fluoride(in) = fluoride(out). Na(+) is not transported, but it plays an essential structural role and its presence is essential for fluoride channel function. Its function is as follows. Fluoride-specific ion channel. Important for reducing fluoride concentration in the cell, thus reducing its toxicity. This chain is Fluoride-specific ion channel FluC, found in Pseudomonas putida (strain ATCC 700007 / DSM 6899 / JCM 31910 / BCRC 17059 / LMG 24140 / F1).